Here is a 140-residue protein sequence, read N- to C-terminus: MDQYLTVNVVTPDGLVYDHHAAIVVARTTAGEIGILPKHAPIIVPLTIDEVRVKRTDSDTHVDWIAVNGGIMEVRDNVVSIVADSAERERDIDVSRAERAKQRAERQIAEAKEKEDTNELKRATVALHRAINRIKVSKHS.

Belongs to the ATPase epsilon chain family. As to quaternary structure, F-type ATPases have 2 components, CF(1) - the catalytic core - and CF(0) - the membrane proton channel. CF(1) has five subunits: alpha(3), beta(3), gamma(1), delta(1), epsilon(1). CF(0) has three main subunits: a, b and c.

Its subcellular location is the cell membrane. Its function is as follows. Produces ATP from ADP in the presence of a proton gradient across the membrane. In Enterococcus hirae (strain ATCC 9790 / DSM 20160 / JCM 8729 / LMG 6399 / NBRC 3181 / NCIMB 6459 / NCDO 1258 / NCTC 12367 / WDCM 00089 / R), this protein is ATP synthase epsilon chain (atpC).